The chain runs to 391 residues: MTKVYFIAGETSGDFIGGRIIQNLKSNKGVEFTGIGGKCMEEAGNFKSLFPITCINLMGFVEILPHIFNLKKLIDKTVQDIINSQADLLITIDSPGFTYRVAKQLRKLLPKLKMIHIVAPSVWAYKDGRAVKYAKIYDCLFALLPFEPPYFTKVGLDCRYIGHPIMEQEFYSDKIALREEFKIDKNERVLCVTLGSRQGEIRKHLPVFISSIEEIFKSCNNLKVIFTLANPAHEAIIKPFLEDVQFHYLFSSARLKAYAVADAALAKSGTNTLEIVASGTPMVVAYQVNLISFFIIRLLIKIKYVTLINIIAGSEIIPEFIQFNCRASLISNTLQELLFNSKKAYKQVIESQKILQTLGLKSNRSPSYIAAEIIKQEFLESKIKLLKENST.

Belongs to the LpxB family.

The enzyme catalyses a lipid X + a UDP-2-N,3-O-bis[(3R)-3-hydroxyacyl]-alpha-D-glucosamine = a lipid A disaccharide + UDP + H(+). It participates in bacterial outer membrane biogenesis; LPS lipid A biosynthesis. Functionally, condensation of UDP-2,3-diacylglucosamine and 2,3-diacylglucosamine-1-phosphate to form lipid A disaccharide, a precursor of lipid A, a phosphorylated glycolipid that anchors the lipopolysaccharide to the outer membrane of the cell. The protein is Lipid-A-disaccharide synthase of Rickettsia akari (strain Hartford).